The chain runs to 2032 residues: MMSDDMLDENDENFACQDVDEIIIYVPEFAGYREVNIDTAVSVCPTPIQQARRESSCRNLEMRRRFEKLRREKKEEKKLLADDEKDFDEDDDVFEDGEGLQMRTFQPNASIRDENGSMPSLLPRTAPIKKTRKHRRRRSGSFTGGVYPRKGHRNRSLLGHAIPPPNVHSADWRDMLAITDNKDDKLMKTLGVTRYLQSKGGDQVPPTSTTTGGAGGDGNAVPTTSQAQAQTFNSGRQTTGMSSGDRLNEDVSATANSAQLVLPTPLFNQMRFTESNMSLNRHNWVRETFTRRECSRFIASSRDLHKCGCGRTRDAHRNIPELTSEFLRQKRSVAALEQQRSISNVNDDINTQNMYTKRGANEKWSLRKHTVSLATNAFGQVEFQGGPHPYKAQYVRVNFDTEPAYIMSLFEHVWQISPPRLIITVHGGTSNFDLQPKLARVFRKGLLKAASTTGAWIITSGCDTGVVKHVAAALEGAQSAQRNKIVCIGIAPWGLLKKREDFIGQDKTVPYYPSSSKGRFTGLNNRHSYFLLVDNGTVGRYGAEVILRKRLEMYISQKQKIFGGTRSVPVVCVVLEGGSCTIRSVLDYVTNVPRVPVVVCDGSGRAADLLAFAHQNVTEDGLLPDDIRRQVLLLVETTFGCSEAAAHRLLHELTVCAQHKNLLTIFRLGEQGEHDVDHAILTALLKGQNLSAADQLALALAWNRVDIARSDVFAMGHEWPQAALHNAMMEALIHDRVDFVRLLLEQGINMQKFLTISRLDELYNTDKGPPNTLFYIVRDVVRVRQGYRFKLPDIGLVIEKLMGNSYQCSYTTSEFRDKYKQRMKRVKHAQKKAMGVFSSRPSRTGSGIASRQSTEGMGGVGGGSSVAGVFGNSFGNQDPPLDPHVNRSALSGSRALSNHILWRSAFRGNFPANPMRPPNLGDSRDCGSEFDEELSLTSASDGSQTEPDFRYPYSELMIWAVLTKRQDMAMCMWQHGEEAMAKALVACRLYKSLATEAAEDYLEVEICEELKKYAEEFRILSLELLDHCYHVDDAQTLQLLTYELSNWSNETCLALAVIVNNKHFLAHPCCQILLADLWHGGLRMRTHSNIKVVLGLICPPFIQMLEFKTREELLNQPQTAAEHQNDMNYSSSSSSSSSSSSSSSSSDSSSFEDDDDENNAHNHDQKRTRKTSQGSAQSLNITSLFHSRRRKAKKNEKCDRETDASACEAGNRQIQNGGLTAEYGTFGESNGVSPPPPYMRANSRSRYNNRSDMSKTSSVIFGSDPNLSKLQKSNITSTDRPNPMEQFQGTRKIKMRRRFYEFYSAPISTFWSWTISFILFITFFTYTLLVKTPPRPTVIEYILIAYVAAFGLEQVRKIIMSDAKPFYEKIRTYVCSFWNCVTILAIIFYIVGFFMRCFGSVAYGRVILACDSVLWTMKLLDYMSVHPKLGPYVTMAGKMIQNMSYIIVMLVVTLLSFGLARQSITYPDETWHWILVRNIFLKPYFMLYGEVYADEIDTCGDEAWDQHLENGGPVILGNGTTGLSCVPGYWIPPLLMTFFLLIANILLMSMLIAIFNHIFDATDEMSQQIWLFQRYKQVMEYESTPFLPPPLTPLYHGVLILQFVRTRLSCSKSQERNPMFDFSLKLFLDNDQIEKLHDFEEDCMEDLARQKLNEKNTSNEQRILRADIRTDQILNRLIDLQAKESMGRDVINDVESRLASVEKAQNEILECVRALLNQNNAPTAIGRCFSPSPDPLVETANGTPGPLLLKLPGTDPILEEKDHDSGENSNSLPPGRIRRNRTATICGGYVSEERNMMLLSPKPSDVSGIPQQRLMSVTSMDPLPLPLAKLSTMSIRRRHEEYTSITDSIAIRHPERRIRNNRSNSSEHDESAVDSEGGGNVTSSPRKRSTRDLRMTPSSQVEESTSRDQIFEIDHPEHEEDEAQADCELTDVITEEEDEEEDDEEDDSHERHHIHPRRKSSRQNRQPSHTLETDLSEGEEVDPLDVLKMKELPIIHQILNEEEQAGAPHSTPVIASPSSSRADLTSQKCSDV.

A compositionally biased stretch (basic residues) spans 129–139 (KKTRKHRRRRS). Disordered regions lie at residues 129-162 (KKTR…GHAI), 197-223 (QSKG…AVPT), 831-860 (KKAM…MGGV), 912-945 (ANPM…GSQT), and 1120-1211 (AAEH…EAGN). Composition is skewed to polar residues over residues 839-855 (SRPS…QSTE), 935-945 (SLTSASDGSQT), and 1120-1129 (AAEHQNDMNY). Low complexity predominate over residues 1130–1149 (SSSSSSSSSSSSSSSSSDSS). The span at 1171–1185 (TSQGSAQSLNITSLF) shows a compositional bias: polar residues. 5 helical membrane passes run 1310-1330 (FWSW…TLLV), 1332-1352 (TPPR…AFGL), 1374-1394 (VCSF…VGFF), 1439-1459 (MIQN…SFGL), and 1535-1555 (LMTF…IAIF). 4 disordered regions span residues 1753-1779 (GTDP…RIRR), 1853-1909 (HPER…SRDQ), 1935-1982 (EEED…EEVD), and 1999-2032 (LNEE…CSDV). A compositionally biased stretch (acidic residues) spans 1935-1947 (EEEDEEEDDEEDD). The segment covering 1951-1962 (RHHIHPRRKSSR) has biased composition (basic residues). Residues 2016 to 2032 (SPSSSRADLTSQKCSDV) show a composition bias toward polar residues.

It belongs to the transient receptor (TC 1.A.4) family. LTrpC subfamily. In terms of tissue distribution, gonads.

It localises to the membrane. Its function is as follows. Required for initiation and continuation of postembryonic mitotic cell divisions of gonadal cells Z1 and Z4. Zygotic expression is necessary for hermaphrodite fertility. May be a cation channel. This Caenorhabditis elegans protein is Transient receptor potential channel (gon-2).